The primary structure comprises 653 residues: Multidomain regulatory protein MT1410 (653 aa).

The PAC domain occupies 86 to 142; it reads SGSEWRLQTDYDGSGVEERYFDFVVTPRRRADGSIEGVQLIVDDVTSRVRARQAAEA. The 220-residue stretch at 177–396 folds into the PPM-type phosphatase domain; the sequence is DIAAEYLVAA…DDVTLLAMQR (220 aa). The Mn(2+) site is built by Asp211, Val212, Asp328, and Asp387. The segment at 397-544 is anti-sigma factor kinase region; that stretch reads RAPTPPLHIT…TMVRRAAFQQ (148 aa). The region spanning 546 to 653 is the STAS domain; it reads IDSEFVSLVE…ADTEDIFAQE (108 aa). Ser600 carries the phosphoserine modification.

It depends on Mg(2+) as a cofactor. Mn(2+) serves as cofactor. Autophosphorylated.

It carries out the reaction O-phospho-L-seryl-[protein] + H2O = L-seryl-[protein] + phosphate. The catalysed reaction is O-phospho-L-threonyl-[protein] + H2O = L-threonyl-[protein] + phosphate. It catalyses the reaction L-seryl-[protein] + ATP = O-phospho-L-seryl-[protein] + ADP + H(+). The enzyme catalyses L-threonyl-[protein] + ATP = O-phospho-L-threonyl-[protein] + ADP + H(+). Its function is as follows. Primarily acts as an independent SigF regulator that is sensitive to the osmosensory signal, mediating the cross talk of PknD with the SigF regulon. Possesses both phosphatase and kinase activities. The kinase domain functions as a classic anti-sigma factor-like kinase to phosphorylate the anti-anti-sigma factor domain at the canonical regulatory site, and the phosphatase domain antagonizes this activity. The sequence is that of Multidomain regulatory protein MT1410 from Mycobacterium tuberculosis (strain CDC 1551 / Oshkosh).